A 972-amino-acid chain; its full sequence is MTDTTKIDYSKTLYLPQTEFPMRAGLPQREPLFVQRWEEMNLYKKLREQAKDRPLYVLHDGPPYANGNIHIGHALNKILKDVITRSFQMRGYNSNYVPGWDCHGLPIEWKIEEKYRAAGKNKDEVPINEFRKECREFASNWIRVQTEEFKRLAILGDFENPYTTMNFHAEARIAGELLKFAASGQLYRGSKPVMWSVVERTALAEAEVEYHDIESDMIWVKFPVAGEVATENDLSGSAVVIWTTTPWTIPGNRAVSYSSRIEYGLFEITEAENDFGPRPGERLVFADKLVEECCAKAKLQFKRLRSVSAEELGKIVLDHPLKGFGGGYEFVVPMLDGDHVTDDAGTGFVHTAPSHGREDFEAWMDNARQLEARGIDPNIPFPVGDDGFYTKDAPGFGPDREGGPARVIDDNGKKGDANKVVIEQLIAADKLFARGRLKHSYPHSWRSKKPVIFRNTPQWFVYMDKNLGDGTTLRSRALKVIDETRFVPTAGQTRLRSMIEGRPDWVLSRQRAWGVPICVFVDEEGNILQDDAVNKRIMDAFEKEGADAWFADGARERFLGARAGEGWTQVRDILDVWFDSGSTHTFTLEDRPDLKWPADVYLEGSDQHRGWFHSSLLESCGTRGRAPYNAVVTHGFTMDEHGKKMSKSLGNTVTPQDVIKESGADILRLWVMTTDYWEDQRLGKSIIQTNIDAYRKLRNTIRWMLGTLAHDEGENVAYADLPELERLMLHRLTELDELVRSGYDTFDFKRIARALVDFMNVELSAFYFDIRKDALYCDAPSSIRRKAALQTVREIFVRLTTWLAPMLPFTMEEAWLDRYPQSVSIHAEQFRPTPAEWRDDVLAEKWRKVRAVRRVVTGALELERADKRIGSSLEAAPVVYIADKSLSDSLEGLDFAEICITSGISVSDAAAPEGAFTLGDVKGVAVVPERAKGEKCARSWRYTTDVGADPEFPEVSARDAAALRELQALGKL.

A 'HIGH' region motif is present at residues Pro-63 to His-73. Glu-603 contributes to the L-isoleucyl-5'-AMP binding site. The short motif at Lys-644 to Ser-648 is the 'KMSKS' region element. Lys-647 is an ATP binding site.

This sequence belongs to the class-I aminoacyl-tRNA synthetase family. IleS type 1 subfamily. In terms of assembly, monomer.

It is found in the cytoplasm. The enzyme catalyses tRNA(Ile) + L-isoleucine + ATP = L-isoleucyl-tRNA(Ile) + AMP + diphosphate. Functionally, catalyzes the attachment of isoleucine to tRNA(Ile). As IleRS can inadvertently accommodate and process structurally similar amino acids such as valine, to avoid such errors it has two additional distinct tRNA(Ile)-dependent editing activities. One activity is designated as 'pretransfer' editing and involves the hydrolysis of activated Val-AMP. The other activity is designated 'posttransfer' editing and involves deacylation of mischarged Val-tRNA(Ile). This chain is Isoleucine--tRNA ligase, found in Brucella melitensis biotype 1 (strain ATCC 23456 / CCUG 17765 / NCTC 10094 / 16M).